The primary structure comprises 150 residues: Cytochrome c oxidase subunit 5A, mitochondrial (150 aa).

The transit peptide at M1–Y41 directs the protein to the mitochondrion. The short motif at L2–A17 is the SIFI-degron element. K87 and K113 each carry N6-acetyllysine. A Phosphothreonine modification is found at T141.

Belongs to the cytochrome c oxidase subunit 5A family. As to quaternary structure, component of the cytochrome c oxidase (complex IV, CIV), a multisubunit enzyme composed of 14 subunits. The complex is composed of a catalytic core of 3 subunits MT-CO1, MT-CO2 and MT-CO3, encoded in the mitochondrial DNA, and 11 supernumerary subunits COX4I, COX5A, COX5B, COX6A, COX6B, COX6C, COX7A, COX7B, COX7C, COX8 and NDUFA4, which are encoded in the nuclear genome. The complex exists as a monomer or a dimer and forms supercomplexes (SCs) in the inner mitochondrial membrane with NADH-ubiquinone oxidoreductase (complex I, CI) and ubiquinol-cytochrome c oxidoreductase (cytochrome b-c1 complex, complex III, CIII), resulting in different assemblies (supercomplex SCI(1)III(2)IV(1) and megacomplex MCI(2)III(2)IV(2)). Interacts with AFG1L. Interacts with RAB5IF. Post-translationally, in response to mitochondrial stress, the precursor protein is ubiquitinated by the SIFI complex in the cytoplasm before mitochondrial import, leading to its degradation. Within the SIFI complex, UBR4 initiates ubiquitin chain that are further elongated or branched by KCMF1.

It localises to the mitochondrion inner membrane. The protein operates within energy metabolism; oxidative phosphorylation. Its function is as follows. Component of the cytochrome c oxidase, the last enzyme in the mitochondrial electron transport chain which drives oxidative phosphorylation. The respiratory chain contains 3 multisubunit complexes succinate dehydrogenase (complex II, CII), ubiquinol-cytochrome c oxidoreductase (cytochrome b-c1 complex, complex III, CIII) and cytochrome c oxidase (complex IV, CIV), that cooperate to transfer electrons derived from NADH and succinate to molecular oxygen, creating an electrochemical gradient over the inner membrane that drives transmembrane transport and the ATP synthase. Cytochrome c oxidase is the component of the respiratory chain that catalyzes the reduction of oxygen to water. Electrons originating from reduced cytochrome c in the intermembrane space (IMS) are transferred via the dinuclear copper A center (CU(A)) of subunit 2 and heme A of subunit 1 to the active site in subunit 1, a binuclear center (BNC) formed by heme A3 and copper B (CU(B)). The BNC reduces molecular oxygen to 2 water molecules using 4 electrons from cytochrome c in the IMS and 4 protons from the mitochondrial matrix. This is Cytochrome c oxidase subunit 5A, mitochondrial (COX5A) from Cebuella pygmaea (Pygmy marmoset).